Consider the following 718-residue polypeptide: Sodium/myo-inositol cotransporter (718 aa).

At M1–D9 the chain is on the extracellular side. A helical membrane pass occupies residues I10 to W29. Residues K30–G38 are Cytoplasmic-facing. A helical membrane pass occupies residues Y39–V57. Residues S58–A86 are Extracellular-facing. Residues L87 to P110 form a helical membrane-spanning segment. Residues E111–Q123 are Cytoplasmic-facing. Residues V124–Y144 traverse the membrane as a helical segment. Residues S145–N157 are Extracellular-facing. A helical transmembrane segment spans residues L158–Y183. At T184–T186 the chain is on the cytoplasmic side. Residues L187–M205 traverse the membrane as a helical segment. The Extracellular portion of the chain corresponds to E206 to G303. N232 is a glycosylation site (N-linked (GlcNAc...) asparagine). Residues F304–F324 traverse the membrane as a helical segment. The Cytoplasmic portion of the chain corresponds to T325–R353. The helical transmembrane segment at L354–M376 threads the bilayer. Topologically, residues S377–E406 are extracellular. Residues L407–V430 traverse the membrane as a helical segment. Over E431–E443 the chain is Cytoplasmic. The helical transmembrane segment at V444–W462 threads the bilayer. The Extracellular portion of the chain corresponds to K463–H510. Residues Y511–L532 form a helical membrane-spanning segment. Residues T533–K695 lie on the Cytoplasmic side of the membrane. S594 and S632 each carry phosphoserine. The helical transmembrane segment at V696–F716 threads the bilayer. Topologically, residues S717 to L718 are extracellular.

This sequence belongs to the sodium:solute symporter (SSF) (TC 2.A.21) family. In terms of assembly, interacts with KCNQ2 (via the pore module). Interacts with KCNQ1; this interaction is direct. Forms coregulatory complexes with ion channels KCNQ2-KCNQ3 and KCNQ1-KCNE2.

It localises to the apical cell membrane. The protein resides in the basolateral cell membrane. It catalyses the reaction myo-inositol(out) + 2 Na(+)(out) = myo-inositol(in) + 2 Na(+)(in). The catalysed reaction is scyllo-inositol(out) + 2 Na(+)(out) = scyllo-inositol(in) + 2 Na(+)(in). Electrogenic Na(+)-coupled sugar symporter that actively transports myo-inositol and its stereoisomer scyllo-inositol across the plasma membrane, with a Na(+) to sugar coupling ratio of 2:1. Maintains myo-inositol concentration gradient that defines cell volume and fluid balance during osmotic stress, in particular in the fetoplacental unit and central nervous system. Forms coregulatory complexes with voltage-gated K(+) ion channels, allosterically altering ion selectivity, voltage dependence and gating kinetics of the channel. In turn, K(+) efflux through the channel forms a local electrical gradient that modulates electrogenic Na(+)-coupled myo-inositol influx through the transporter. Associates with KCNQ1-KCNE2 channel in the apical membrane of choroid plexus epithelium and regulates the myo-inositol gradient between blood and cerebrospinal fluid with an impact on neuron excitability. Associates with KCNQ2-KCNQ3 channel altering ion selectivity, increasing Na(+) and Cs(+) permeation relative to K(+) permeation. Provides myo-inositol precursor for biosynthesis of phosphoinositides such as PI(4,5)P2, thus indirectly affecting the activity of phosphoinositide-dependent ion channels and Ca(2+) signaling upon osmotic stress. The chain is Sodium/myo-inositol cotransporter from Homo sapiens (Human).